Here is a 239-residue protein sequence, read N- to C-terminus: Ribosomal RNA small subunit methyltransferase G (239 aa).

S-adenosyl-L-methionine contacts are provided by residues G78, F83, 129 to 130, and R148; that span reads AE.

Belongs to the methyltransferase superfamily. RNA methyltransferase RsmG family.

It is found in the cytoplasm. Its function is as follows. Specifically methylates the N7 position of a guanine in 16S rRNA. This is Ribosomal RNA small subunit methyltransferase G from Clostridium botulinum (strain Loch Maree / Type A3).